We begin with the raw amino-acid sequence, 207 residues long: ATP-dependent Clp protease proteolytic subunit (207 aa).

The active-site Nucleophile is the Ser111. His136 is a catalytic residue.

Belongs to the peptidase S14 family. Fourteen ClpP subunits assemble into 2 heptameric rings which stack back to back to give a disk-like structure with a central cavity, resembling the structure of eukaryotic proteasomes. Component of the ClpAP and ClpXP complexes.

The protein localises to the cytoplasm. The enzyme catalyses Hydrolysis of proteins to small peptides in the presence of ATP and magnesium. alpha-casein is the usual test substrate. In the absence of ATP, only oligopeptides shorter than five residues are hydrolyzed (such as succinyl-Leu-Tyr-|-NHMec, and Leu-Tyr-Leu-|-Tyr-Trp, in which cleavage of the -Tyr-|-Leu- and -Tyr-|-Trp bonds also occurs).. Functionally, cleaves peptides in various proteins in a process that requires ATP hydrolysis. Has a chymotrypsin-like activity. Plays a major role in the degradation of misfolded proteins. The sequence is that of ATP-dependent Clp protease proteolytic subunit from Salmonella enteritidis PT4 (strain P125109).